The chain runs to 331 residues: ADP-L-glycero-D-manno-heptose-6-epimerase (331 aa).

Residues 11–12, 32–33, K39, K54, 75–79, and N92 contribute to the NADP(+) site; these read FI, DN, and EGACS. Catalysis depends on Y139, which acts as the Proton acceptor. K143 serves as a coordination point for NADP(+). A substrate-binding site is contributed by N168. Residues V169 and K177 each coordinate NADP(+). Catalysis depends on K177, which acts as the Proton acceptor. Substrate is bound by residues R179, H186, 200–203, R213, and Y292; that span reads FGEY.

The protein belongs to the NAD(P)-dependent epimerase/dehydratase family. HldD subfamily. As to quaternary structure, homopentamer. NADP(+) serves as cofactor.

The catalysed reaction is ADP-D-glycero-beta-D-manno-heptose = ADP-L-glycero-beta-D-manno-heptose. It functions in the pathway nucleotide-sugar biosynthesis; ADP-L-glycero-beta-D-manno-heptose biosynthesis; ADP-L-glycero-beta-D-manno-heptose from D-glycero-beta-D-manno-heptose 7-phosphate: step 4/4. Catalyzes the interconversion between ADP-D-glycero-beta-D-manno-heptose and ADP-L-glycero-beta-D-manno-heptose via an epimerization at carbon 6 of the heptose. The chain is ADP-L-glycero-D-manno-heptose-6-epimerase from Cupriavidus taiwanensis (strain DSM 17343 / BCRC 17206 / CCUG 44338 / CIP 107171 / LMG 19424 / R1) (Ralstonia taiwanensis (strain LMG 19424)).